A 266-amino-acid chain; its full sequence is Chymotrypsin-like elastase family member 1 (266 aa).

The N-terminal stretch at 1 to 16 (MLRFLVFASLVLCGHS) is a signal peptide. A propeptide spans 17-26 (TEDVPETDAR) (activation peptide). In terms of domain architecture, Peptidase S1 spans 27–264 (VVGGAEARRN…YISWMNNVIA (238 aa)). A disulfide bridge connects residues Cys-56 and Cys-72. Residue His-71 is the Charge relay system of the active site. Residues Glu-85, Asn-87, Gln-90, and Glu-95 each contribute to the Ca(2+) site. An N-linked (GlcNAc...) asparagine glycan is attached at Asn-87. Residue Asp-119 is the Charge relay system of the active site. Intrachain disulfides connect Cys-153–Cys-220, Cys-184–Cys-200, and Cys-210–Cys-240. Ser-214 (charge relay system) is an active-site residue.

This sequence belongs to the peptidase S1 family. Elastase subfamily. Ca(2+) is required as a cofactor.

It is found in the secreted. The catalysed reaction is Hydrolysis of proteins, including elastin. Preferential cleavage: Ala-|-Xaa.. Functionally, serine proteases that hydrolyze many proteins in addition to elastin. This chain is Chymotrypsin-like elastase family member 1 (Cela1), found in Mus musculus (Mouse).